The sequence spans 362 residues: 3-dehydroquinate synthase (362 aa).

NAD(+) contacts are provided by residues 71 to 76 (DGEQYK), 105 to 109 (GVVGD), 129 to 130 (TT), K142, K151, and 169 to 172 (CLKT). The Zn(2+) site is built by E184, H248, and H265.

The protein belongs to the sugar phosphate cyclases superfamily. Dehydroquinate synthase family. It depends on Co(2+) as a cofactor. Zn(2+) serves as cofactor. The cofactor is NAD(+).

It localises to the cytoplasm. It carries out the reaction 7-phospho-2-dehydro-3-deoxy-D-arabino-heptonate = 3-dehydroquinate + phosphate. It functions in the pathway metabolic intermediate biosynthesis; chorismate biosynthesis; chorismate from D-erythrose 4-phosphate and phosphoenolpyruvate: step 2/7. Its function is as follows. Catalyzes the conversion of 3-deoxy-D-arabino-heptulosonate 7-phosphate (DAHP) to dehydroquinate (DHQ). The protein is 3-dehydroquinate synthase of Yersinia pseudotuberculosis serotype O:1b (strain IP 31758).